Consider the following 225-residue polypeptide: 7-cyano-7-deazaguanine synthase (225 aa).

An ATP-binding site is contributed by 10–20 (FSGGQDSTTLA). Zn(2+) contacts are provided by Cys-190, Cys-205, Cys-208, and Cys-211.

Belongs to the QueC family. Requires Zn(2+) as cofactor.

The catalysed reaction is 7-carboxy-7-deazaguanine + NH4(+) + ATP = 7-cyano-7-deazaguanine + ADP + phosphate + H2O + H(+). Its pathway is purine metabolism; 7-cyano-7-deazaguanine biosynthesis. Catalyzes the ATP-dependent conversion of 7-carboxy-7-deazaguanine (CDG) to 7-cyano-7-deazaguanine (preQ(0)). The protein is 7-cyano-7-deazaguanine synthase of Helicobacter pylori (strain J99 / ATCC 700824) (Campylobacter pylori J99).